The chain runs to 336 residues: Biotin synthase (336 aa).

Positions 36–263 (TKVQISTLLS…ESHVRLAAGR (228 aa)) constitute a Radical SAM core domain. Residues cysteine 51, cysteine 55, and cysteine 58 each contribute to the [4Fe-4S] cluster site. Positions 95, 126, 186, and 258 each coordinate [2Fe-2S] cluster.

This sequence belongs to the radical SAM superfamily. Biotin synthase family. As to quaternary structure, homodimer. [4Fe-4S] cluster serves as cofactor. The cofactor is [2Fe-2S] cluster.

It carries out the reaction (4R,5S)-dethiobiotin + (sulfur carrier)-SH + 2 reduced [2Fe-2S]-[ferredoxin] + 2 S-adenosyl-L-methionine = (sulfur carrier)-H + biotin + 2 5'-deoxyadenosine + 2 L-methionine + 2 oxidized [2Fe-2S]-[ferredoxin]. It participates in cofactor biosynthesis; biotin biosynthesis; biotin from 7,8-diaminononanoate: step 2/2. Catalyzes the conversion of dethiobiotin (DTB) to biotin by the insertion of a sulfur atom into dethiobiotin via a radical-based mechanism. This is Biotin synthase from Gluconobacter oxydans (strain 621H) (Gluconobacter suboxydans).